The primary structure comprises 420 residues: Glucose-1-phosphate adenylyltransferase (420 aa).

Residues Tyr-107, Gly-172, 187 to 188, and Ser-205 contribute to the alpha-D-glucose 1-phosphate site; that span reads EK.

It belongs to the bacterial/plant glucose-1-phosphate adenylyltransferase family. Homotetramer.

The enzyme catalyses alpha-D-glucose 1-phosphate + ATP + H(+) = ADP-alpha-D-glucose + diphosphate. Its pathway is glycan biosynthesis; glycogen biosynthesis. Its function is as follows. Involved in the biosynthesis of ADP-glucose, a building block required for the elongation reactions to produce glycogen. Catalyzes the reaction between ATP and alpha-D-glucose 1-phosphate (G1P) to produce pyrophosphate and ADP-Glc. The sequence is that of Glucose-1-phosphate adenylyltransferase from Rhizobium etli (strain ATCC 51251 / DSM 11541 / JCM 21823 / NBRC 15573 / CFN 42).